We begin with the raw amino-acid sequence, 128 residues long: Small ribosomal subunit protein uS9c (128 aa).

The protein belongs to the universal ribosomal protein uS9 family.

The protein localises to the plastid. In Euglena longa (Euglenophycean alga), this protein is Small ribosomal subunit protein uS9c (rps9).